The sequence spans 270 residues: Glutamate racemase (270 aa).

Residues 10–11 and 42–43 contribute to the substrate site; these read DS and YG. The active-site Proton donor/acceptor is the C74. Substrate is bound at residue 75 to 76; that stretch reads NT. C189 (proton donor/acceptor) is an active-site residue. 190–191 is a substrate binding site; the sequence is TH.

It belongs to the aspartate/glutamate racemases family.

It catalyses the reaction L-glutamate = D-glutamate. It functions in the pathway cell wall biogenesis; peptidoglycan biosynthesis. In terms of biological role, provides the (R)-glutamate required for cell wall biosynthesis. This chain is Glutamate racemase, found in Bartonella henselae (strain ATCC 49882 / DSM 28221 / CCUG 30454 / Houston 1) (Rochalimaea henselae).